A 335-amino-acid polypeptide reads, in one-letter code: Ubiquinone biosynthesis protein COQ4, mitochondrial (335 aa).

The transit peptide at Met-1–Thr-10 directs the protein to the mitochondrion. Zn(2+) is bound by residues His-210, Asp-211, His-214, and Glu-226.

This sequence belongs to the COQ4 family. In terms of assembly, component of a multi-subunit COQ enzyme complex, composed of at least COQ3, COQ4, COQ5, COQ6, COQ7 and COQ9. Interacts with COQ3. Zn(2+) serves as cofactor.

It is found in the mitochondrion inner membrane. The enzyme catalyses 4-hydroxy-3-methoxy-5-(all-trans-hexaprenyl)benzoate + H(+) = 2-methoxy-6-(all-trans-hexaprenyl)phenol + CO2. It functions in the pathway cofactor biosynthesis; ubiquinone biosynthesis. Lyase that catalyzes the C1-decarboxylation of 4-hydroxy-3-methoxy-5-(all-trans-hexaprenyl)benzoic acid into 2-methoxy-6-(all-trans-hexaprenyl)phenol during ubiquinone biosynthesis. May play a role in organizing a multi-subunit COQ enzyme complex required for coenzyme Q biosynthesis. Required for steady-state levels of COQ3, COQ4, COQ6, COQ7 and COQ9 polypeptides. In Saccharomyces cerevisiae (strain ATCC 204508 / S288c) (Baker's yeast), this protein is Ubiquinone biosynthesis protein COQ4, mitochondrial.